We begin with the raw amino-acid sequence, 174 residues long: Type II secretion system protein M (174 aa).

The Cytoplasmic segment spans residues 1–32; the sequence is MKVMTQFHERLRAQAETSQLAIRWRGLPARDR. Residues 33-52 traverse the membrane as a helical segment; the sequence is LALLWLGAFLLLVVLYLALW. At 53–174 the chain is on the periplasmic side; the sequence is RPAERHLQSA…VSARLSLRVE (122 aa).

This sequence belongs to the GSP M family. Type II secretion system is composed of four main components: the outer membrane complex, the inner membrane complex, the cytoplasmic secretion ATPase and the periplasm-spanning pseudopilus. Forms homodimers. Interacts with XcpY/GspL. Interacts with XcpR/GspE and XcpS/GspF.

Its subcellular location is the cell inner membrane. Functionally, inner membrane component of the type II secretion system required for the energy-dependent secretion of extracellular factors such as proteases and toxins from the periplasm. Plays a role in the complex assembly and recruits XcpY resulting in a stable complex in the inner membrane. Provides thus a link between the energy-providing XcpR protein in the cytoplasm and the rest of the T2SS machinery. The chain is Type II secretion system protein M (xcpZ) from Pseudomonas aeruginosa (strain ATCC 15692 / DSM 22644 / CIP 104116 / JCM 14847 / LMG 12228 / 1C / PRS 101 / PAO1).